Consider the following 83-residue polypeptide: Cytotoxin homolog 5 (83 aa).

The signal sequence occupies residues 1–21 (MKTLLLTMVVVTIVCLDLGYT). 4 cysteine pairs are disulfide-bonded: Cys24–Cys43, Cys36–Cys61, Cys65–Cys76, and Cys77–Cys82.

Belongs to the three-finger toxin family. Short-chain subfamily. Orphan group XV sub-subfamily. In terms of tissue distribution, expressed by the venom gland.

It is found in the secreted. Its subcellular location is the target cell membrane. Has low cytotoxic activity. The protein is Cytotoxin homolog 5 of Naja atra (Chinese cobra).